A 397-amino-acid polypeptide reads, in one-letter code: Elongation factor Tu (397 aa).

Positions 10–206 constitute a tr-type G domain; sequence KPHVNIGTIG…AVDTSIPQPE (197 aa). The tract at residues 19 to 26 is G1; sequence GHIDHGKT. Residue 19–26 coordinates GTP; the sequence is GHIDHGKT. Residue threonine 26 coordinates Mg(2+). Residues 62 to 66 form a G2 region; sequence GITIS. Residues 83–86 form a G3 region; the sequence is DCPG. Residues 83–87 and 138–141 contribute to the GTP site; these read DCPGH and NKSD. The segment at 138 to 141 is G4; the sequence is NKSD. The G5 stretch occupies residues 176–178; that stretch reads SAL.

Belongs to the TRAFAC class translation factor GTPase superfamily. Classic translation factor GTPase family. EF-Tu/EF-1A subfamily. As to quaternary structure, monomer.

It is found in the cytoplasm. It catalyses the reaction GTP + H2O = GDP + phosphate + H(+). In terms of biological role, GTP hydrolase that promotes the GTP-dependent binding of aminoacyl-tRNA to the A-site of ribosomes during protein biosynthesis. In Salinispora arenicola (strain CNS-205), this protein is Elongation factor Tu.